A 415-amino-acid polypeptide reads, in one-letter code: Levansucrase (415 aa).

The sucrose site is built by Trp-45, Asp-46, Ala-132, Arg-202, and Asp-203. Catalysis depends on Asp-46, which acts as the Nucleophile. Catalysis depends on Glu-287, which acts as the Proton donor/acceptor.

This sequence belongs to the glycosyl hydrolase 68 family.

It is found in the secreted. It catalyses the reaction [6)-beta-D-fructofuranosyl-(2-&gt;](n) alpha-D-glucopyranoside + sucrose = [6)-beta-D-fructofuranosyl-(2-&gt;](n+1) alpha-D-glucopyranoside + D-glucose. In terms of biological role, catalyzes the synthesis of levan, a fructose polymer, by transferring the fructosyl moiety from sucrose to a growing acceptor molecule. In Erwinia amylovora (Fire blight bacteria), this protein is Levansucrase.